The sequence spans 164 residues: Low molecular weight phosphotyrosine protein phosphatase 2 (164 aa).

The active-site Nucleophile is the Cys-14. Arg-20 is a catalytic residue. Asp-130 (proton donor) is an active-site residue.

The protein belongs to the low molecular weight phosphotyrosine protein phosphatase family. As to expression, cone cells and primary pigment cells in developing pupal retina.

The protein localises to the cytoplasm. The catalysed reaction is O-phospho-L-tyrosyl-[protein] + H2O = L-tyrosyl-[protein] + phosphate. The enzyme catalyses a phosphate monoester + H2O = an alcohol + phosphate. Catalyzes the dephosphorylation of tyrosine phosphorylated proteins and low-MW aryl phosphates. Can contribute to the regulation of a variety of developmental processes. This Drosophila melanogaster (Fruit fly) protein is Low molecular weight phosphotyrosine protein phosphatase 2 (primo-2).